A 327-amino-acid chain; its full sequence is Glycerol-3-phosphate dehydrogenase [NAD(P)+] (327 aa).

Residues phenylalanine 13, arginine 34, and lysine 107 each coordinate NADPH. The sn-glycerol 3-phosphate site is built by lysine 107 and glycine 135. Alanine 139 provides a ligand contact to NADPH. Sn-glycerol 3-phosphate contacts are provided by lysine 190, aspartate 243, serine 253, arginine 254, and asparagine 255. Residue lysine 190 is the Proton acceptor of the active site. Arginine 254 serves as a coordination point for NADPH. NADPH is bound by residues valine 276 and glutamate 277.

The protein belongs to the NAD-dependent glycerol-3-phosphate dehydrogenase family.

The protein resides in the cytoplasm. It catalyses the reaction sn-glycerol 3-phosphate + NAD(+) = dihydroxyacetone phosphate + NADH + H(+). The enzyme catalyses sn-glycerol 3-phosphate + NADP(+) = dihydroxyacetone phosphate + NADPH + H(+). It functions in the pathway membrane lipid metabolism; glycerophospholipid metabolism. Catalyzes the reduction of the glycolytic intermediate dihydroxyacetone phosphate (DHAP) to sn-glycerol 3-phosphate (G3P), the key precursor for phospholipid synthesis. The polypeptide is Glycerol-3-phosphate dehydrogenase [NAD(P)+] (Rhizobium johnstonii (strain DSM 114642 / LMG 32736 / 3841) (Rhizobium leguminosarum bv. viciae)).